A 69-amino-acid polypeptide reads, in one-letter code: Large ribosomal subunit protein uL29 (69 aa).

The protein belongs to the universal ribosomal protein uL29 family.

The protein is Large ribosomal subunit protein uL29 of Clostridium perfringens (strain ATCC 13124 / DSM 756 / JCM 1290 / NCIMB 6125 / NCTC 8237 / Type A).